Here is a 577-residue protein sequence, read N- to C-terminus: Arginine--tRNA ligase (577 aa).

Positions 122-132 (PNVAKEMHVGH) match the 'HIGH' region motif.

The protein belongs to the class-I aminoacyl-tRNA synthetase family. As to quaternary structure, monomer.

The protein localises to the cytoplasm. It catalyses the reaction tRNA(Arg) + L-arginine + ATP = L-arginyl-tRNA(Arg) + AMP + diphosphate. The chain is Arginine--tRNA ligase from Enterobacter sp. (strain 638).